The primary structure comprises 106 residues: ATP-dependent Clp protease adapter protein ClpS (106 aa).

It belongs to the ClpS family. Binds to the N-terminal domain of the chaperone ClpA.

In terms of biological role, involved in the modulation of the specificity of the ClpAP-mediated ATP-dependent protein degradation. In Enterobacter sp. (strain 638), this protein is ATP-dependent Clp protease adapter protein ClpS.